A 284-amino-acid polypeptide reads, in one-letter code: Probable endonuclease 4 (284 aa).

Zn(2+) contacts are provided by H69, H109, E145, D179, H182, H216, D229, H231, and E261.

The protein belongs to the AP endonuclease 2 family. The cofactor is Zn(2+).

The catalysed reaction is Endonucleolytic cleavage to 5'-phosphooligonucleotide end-products.. Functionally, endonuclease IV plays a role in DNA repair. It cleaves phosphodiester bonds at apurinic or apyrimidinic (AP) sites, generating a 3'-hydroxyl group and a 5'-terminal sugar phosphate. The sequence is that of Probable endonuclease 4 from Klebsiella pneumoniae subsp. pneumoniae (strain ATCC 700721 / MGH 78578).